The sequence spans 577 residues: Isocitrate dehydrogenase kinase/phosphatase (577 aa).

Residues 318–324 (APGVRGM) and K339 contribute to the ATP site. The active site involves D374.

The protein belongs to the AceK family.

The protein localises to the cytoplasm. The enzyme catalyses L-seryl-[isocitrate dehydrogenase] + ATP = O-phospho-L-seryl-[isocitrate dehydrogenase] + ADP + H(+). Bifunctional enzyme which can phosphorylate or dephosphorylate isocitrate dehydrogenase (IDH) on a specific serine residue. This is a regulatory mechanism which enables bacteria to bypass the Krebs cycle via the glyoxylate shunt in response to the source of carbon. When bacteria are grown on glucose, IDH is fully active and unphosphorylated, but when grown on acetate or ethanol, the activity of IDH declines drastically concomitant with its phosphorylation. The sequence is that of Isocitrate dehydrogenase kinase/phosphatase from Pseudomonas aeruginosa (strain UCBPP-PA14).